Here is a 103-residue protein sequence, read N- to C-terminus: Large ribosomal subunit protein bL21 (103 aa).

The protein belongs to the bacterial ribosomal protein bL21 family. As to quaternary structure, part of the 50S ribosomal subunit. Contacts protein L20.

This protein binds to 23S rRNA in the presence of protein L20. The protein is Large ribosomal subunit protein bL21 of Shewanella sp. (strain ANA-3).